Reading from the N-terminus, the 717-residue chain is Aryl hydrocarbon receptor nuclear translocator 2 (717 aa).

Disordered regions lie at residues 1–20 (MATP…PGSV) and 35–74 (MAGA…IERR). Arg-42 carries the omega-N-methylarginine modification. A compositionally biased stretch (basic and acidic residues) spans 63–73 (FSRENHSEIER). The bHLH domain occupies 63-116 (FSRENHSEIERRRRNKMTQYITELSDMVPTCSALARKPDKLTILRMAVSHMKSM). PAS domains lie at 134 to 209 (TEQE…MTGR) and 323 to 393 (PVCM…VKLK). The PAC domain occupies 398–441 (SVMYRFRTKNREWMLIRTSSFTFQNPYSDEIEYIICTNTNVKQL). The segment at 548–717 (NDIQSSSSTG…DLGMFPPFSE (170 aa)) is disordered. 2 stretches are compositionally biased toward polar residues: residues 549 to 574 (DIQS…QVAW) and 585 to 605 (QIPS…TSHT). Low complexity predominate over residues 610-625 (PSSYSPLSSPATSSPS). Over residues 642–651 (SGQSSGQFQG) the composition is skewed to polar residues. Low complexity predominate over residues 658–680 (SQWQSQHHGQQSGEQHSHQQPGQ).

Efficient DNA binding requires dimerization with another bHLH protein. Heterodimer with NPAS4. Heterodimer with SIM1. Heterodimer with the aryl hydrocarbon receptor (AHR) or the SIM1 protein. Interacts with TACC3.

The protein resides in the nucleus. Its function is as follows. Transcription factor that plays a role in the development of the hypothalamo-pituitary axis, postnatal brain growth, and visual and renal function. Specifically recognizes the xenobiotic response element (XRE). The protein is Aryl hydrocarbon receptor nuclear translocator 2 (ARNT2) of Homo sapiens (Human).